Reading from the N-terminus, the 74-residue chain is Putative Fe(2+) transport protein A (74 aa).

The protein belongs to the FeoA family.

Functionally, might be involved in Fe(2+) ion uptake. This chain is Putative Fe(2+) transport protein A, found in Campylobacter jejuni subsp. jejuni serotype O:2 (strain ATCC 700819 / NCTC 11168).